Reading from the N-terminus, the 185-residue chain is Ribosome-recycling factor (185 aa).

This sequence belongs to the RRF family.

It localises to the cytoplasm. In terms of biological role, responsible for the release of ribosomes from messenger RNA at the termination of protein biosynthesis. May increase the efficiency of translation by recycling ribosomes from one round of translation to another. This chain is Ribosome-recycling factor, found in Azotobacter vinelandii (strain DJ / ATCC BAA-1303).